We begin with the raw amino-acid sequence, 208 residues long: UPF0301 protein MAB_4928c (208 aa).

It belongs to the UPF0301 (AlgH) family.

The sequence is that of UPF0301 protein MAB_4928c from Mycobacteroides abscessus (strain ATCC 19977 / DSM 44196 / CCUG 20993 / CIP 104536 / JCM 13569 / NCTC 13031 / TMC 1543 / L948) (Mycobacterium abscessus).